Reading from the N-terminus, the 239-residue chain is Fatty acid metabolism regulator protein (239 aa).

The region spanning 6-74 (QSPAGFAEEY…HGKPTKVNNF (69 aa)) is the HTH gntR-type domain. The segment at residues 34–53 (ERELSELIGVTRTTLREVLQ) is a DNA-binding region (H-T-H motif).

As to quaternary structure, homodimer.

The protein localises to the cytoplasm. Multifunctional regulator of fatty acid metabolism. The chain is Fatty acid metabolism regulator protein from Proteus mirabilis (strain HI4320).